We begin with the raw amino-acid sequence, 516 residues long: uncharacterized protein (516 aa).

9 helical membrane-spanning segments follow: residues 183–203, 261–281, 308–328, 329–349, 356–376, 379–399, 430–450, 461–481, and 492–512; these read SAAD…GDGV, VLKT…TYII, VMNG…TALL, LDHQ…AYSF, LLDV…GQVL, LAFS…LALA, LGHG…FLAL, PAWL…IWLL, and IVFA…ASAF.

Its subcellular location is the cell membrane. Possible permease/transporter. This is an uncharacterized protein from Sinorhizobium fredii (strain NBRC 101917 / NGR234).